The primary structure comprises 294 residues: N-acetylmuramic acid 6-phosphate etherase (294 aa).

The SIS domain occupies 54-217 (VISSFQNGGR…STASMIGIGK (164 aa)). Catalysis depends on E82, which acts as the Proton donor. E113 is an active-site residue.

It belongs to the GCKR-like family. MurNAc-6-P etherase subfamily. As to quaternary structure, homodimer.

The enzyme catalyses N-acetyl-D-muramate 6-phosphate + H2O = N-acetyl-D-glucosamine 6-phosphate + (R)-lactate. The protein operates within amino-sugar metabolism; N-acetylmuramate degradation. In terms of biological role, specifically catalyzes the cleavage of the D-lactyl ether substituent of MurNAc 6-phosphate, producing GlcNAc 6-phosphate and D-lactate. In Bacillus cytotoxicus (strain DSM 22905 / CIP 110041 / 391-98 / NVH 391-98), this protein is N-acetylmuramic acid 6-phosphate etherase.